We begin with the raw amino-acid sequence, 308 residues long: Olfactory receptor 4E2 (308 aa).

The Extracellular segment spans residues 1-24 (MGALNQTRVTEFIFLGLTDNWVLE). N5 carries an N-linked (GlcNAc...) asparagine glycan. A helical membrane pass occupies residues 25 to 45 (ILFFVPFTVTYMLTLLGNFLI). Residues 46–57 (VVTIVFTPRLHN) are Cytoplasmic-facing. Residues 58–78 (PMYFFLSNLSFIDICHSSVTV) form a helical membrane-spanning segment. Topologically, residues 79–97 (PKMLEGLLLERKTISFDNC) are extracellular. The cysteines at positions 97 and 179 are disulfide-linked. Residues 98 to 118 (IAQLFFLHLFACSEIFLLTIM) traverse the membrane as a helical segment. Cu cation contacts are provided by H105 and C109. The Cytoplasmic segment spans residues 119–143 (AYDRYVAICIPLHYSNVMNMKVCVQ). The chain crosses the membrane as a helical span at residues 144-164 (LVFALWLGGTIHSLVQTFLTI). The Extracellular portion of the chain corresponds to 165–204 (RLPYCGPNIIDSYFCDVPPVIKLACTDTYLTGILIVSNSG). The chain crosses the membrane as a helical span at residues 205-225 (TISLVCFLALVTSYTVILFSL). The Cytoplasmic segment spans residues 226–236 (RKQSAEGRRKA). Residues 237-257 (LSTCSAHFMVVALFFGPCIFL) traverse the membrane as a helical segment. The Extracellular portion of the chain corresponds to 258–268 (YTRPDSSFSID). Position 260 (R260) interacts with Cu cation. The chain crosses the membrane as a helical span at residues 269–289 (KVVSVFYTVVTPLLNPLIYTL). The Cytoplasmic portion of the chain corresponds to 290–308 (RNEEVKTAMKHLRQRRICS).

This sequence belongs to the G-protein coupled receptor 1 family. As to expression, expressed in olfactory epithelium, specifically in the olfactory sensory neurons of the septal organ.

The protein resides in the cell membrane. With respect to regulation, copper binding enhances receptor activity in response to odorant binding. Its function is as follows. Olfactory receptor that is activated by the binding of organosulfur odorants with thioether groups such as (methylthio)methanethiol (MTMT) and bis(methylthiomethyl) disulfide. Also binds odorants cis-cyclooctene and tert-butyl mercaptan. The activity of this receptor is mediated by G proteins which activate adenylyl cyclase (Potential). This chain is Olfactory receptor 4E2, found in Mus musculus (Mouse).